The primary structure comprises 228 residues: 2-C-methyl-D-erythritol 4-phosphate cytidylyltransferase (228 aa).

It belongs to the IspD/TarI cytidylyltransferase family. IspD subfamily.

It carries out the reaction 2-C-methyl-D-erythritol 4-phosphate + CTP + H(+) = 4-CDP-2-C-methyl-D-erythritol + diphosphate. It functions in the pathway isoprenoid biosynthesis; isopentenyl diphosphate biosynthesis via DXP pathway; isopentenyl diphosphate from 1-deoxy-D-xylulose 5-phosphate: step 2/6. In terms of biological role, catalyzes the formation of 4-diphosphocytidyl-2-C-methyl-D-erythritol from CTP and 2-C-methyl-D-erythritol 4-phosphate (MEP). The protein is 2-C-methyl-D-erythritol 4-phosphate cytidylyltransferase of Crocosphaera subtropica (strain ATCC 51142 / BH68) (Cyanothece sp. (strain ATCC 51142)).